Here is a 422-residue protein sequence, read N- to C-terminus: Protein arginine methyltransferase NDUFAF7, mitochondrial (422 aa).

Residues 1-28 (MRTLLRLKRLMPEVLWTKRSCSSSSINK) constitute a mitochondrion transit peptide.

The protein belongs to the NDUFAF7 family.

The protein localises to the mitochondrion. It catalyses the reaction L-arginyl-[protein] + 2 S-adenosyl-L-methionine = N(omega),N(omega)'-dimethyl-L-arginyl-[protein] + 2 S-adenosyl-L-homocysteine + 2 H(+). Arginine methyltransferase involved in the assembly or stability of mitochondrial NADH:ubiquinone oxidoreductase complex (complex I). Acts by mediating symmetric dimethylation of 'Arg-118' of ndufs2 after it assembles into the complex I, stabilizing the early intermediate complex. This Danio rerio (Zebrafish) protein is Protein arginine methyltransferase NDUFAF7, mitochondrial.